Consider the following 132-residue polypeptide: Small ribosomal subunit protein uS8 (132 aa).

The protein belongs to the universal ribosomal protein uS8 family. Part of the 30S ribosomal subunit. Contacts proteins S5 and S12.

Functionally, one of the primary rRNA binding proteins, it binds directly to 16S rRNA central domain where it helps coordinate assembly of the platform of the 30S subunit. In Bacillus mycoides (strain KBAB4) (Bacillus weihenstephanensis), this protein is Small ribosomal subunit protein uS8.